A 784-amino-acid chain; its full sequence is DNA ligase (784 aa).

NAD(+) is bound by residues Asp35–Asp39, Ser84–Leu85, and Glu117. Lys119 acts as the N6-AMP-lysine intermediate in catalysis. Residues Arg140, Glu177, Lys294, and Lys318 each coordinate NAD(+). Cys412, Cys415, Cys442, and Cys448 together coordinate Zn(2+). Positions Ala703–Ser784 constitute a BRCT domain.

It belongs to the NAD-dependent DNA ligase family. LigA subfamily. Mg(2+) serves as cofactor. It depends on Mn(2+) as a cofactor.

It catalyses the reaction NAD(+) + (deoxyribonucleotide)n-3'-hydroxyl + 5'-phospho-(deoxyribonucleotide)m = (deoxyribonucleotide)n+m + AMP + beta-nicotinamide D-nucleotide.. Its function is as follows. DNA ligase that catalyzes the formation of phosphodiester linkages between 5'-phosphoryl and 3'-hydroxyl groups in double-stranded DNA using NAD as a coenzyme and as the energy source for the reaction. It is essential for DNA replication and repair of damaged DNA. The polypeptide is DNA ligase (Azotobacter vinelandii (strain DJ / ATCC BAA-1303)).